Here is a 232-residue protein sequence, read N- to C-terminus: Ubiquinone biosynthesis O-methyltransferase (232 aa).

Residues Arg36, Gly55, Asp76, and Met120 each coordinate S-adenosyl-L-methionine.

It belongs to the methyltransferase superfamily. UbiG/COQ3 family.

The enzyme catalyses a 3-demethylubiquinol + S-adenosyl-L-methionine = a ubiquinol + S-adenosyl-L-homocysteine + H(+). The catalysed reaction is a 3-(all-trans-polyprenyl)benzene-1,2-diol + S-adenosyl-L-methionine = a 2-methoxy-6-(all-trans-polyprenyl)phenol + S-adenosyl-L-homocysteine + H(+). It participates in cofactor biosynthesis; ubiquinone biosynthesis. In terms of biological role, O-methyltransferase that catalyzes the 2 O-methylation steps in the ubiquinone biosynthetic pathway. The polypeptide is Ubiquinone biosynthesis O-methyltransferase (Thiobacillus denitrificans (strain ATCC 25259 / T1)).